Reading from the N-terminus, the 798-residue chain is Integrin beta-1 (798 aa).

Positions 1 to 20 (MNLQLIFWIGLISSICCVFG) are cleaved as a signal peptide. Residues 21–728 (QADENRCLKA…ETPECPTGPD (708 aa)) lie on the Extracellular side of the membrane. Residues 26 to 76 (RCLKANAKSCGECIQAGPNCGWCVNSTFLQEGMPTSARCDDLEALKKKGCH) form the PSI domain. 28 disulfide bridges follow: cysteine 27–cysteine 45, cysteine 35–cysteine 464, cysteine 38–cysteine 64, cysteine 48–cysteine 75, cysteine 207–cysteine 213, cysteine 261–cysteine 301, cysteine 401–cysteine 415, cysteine 435–cysteine 462, cysteine 466–cysteine 486, cysteine 477–cysteine 489, cysteine 491–cysteine 500, cysteine 502–cysteine 533, cysteine 516–cysteine 531, cysteine 525–cysteine 536, cysteine 538–cysteine 553, cysteine 555–cysteine 576, cysteine 560–cysteine 574, cysteine 568–cysteine 579, cysteine 581–cysteine 590, cysteine 592–cysteine 615, cysteine 599–cysteine 613, cysteine 607–cysteine 618, cysteine 620–cysteine 630, cysteine 633–cysteine 636, cysteine 640–cysteine 691, cysteine 646–cysteine 665, cysteine 649–cysteine 661, and cysteine 699–cysteine 723. An N-linked (GlcNAc...) asparagine glycan is attached at asparagine 50. Residues 75 to 91 (CHPDDIENPRGSKDVKK) show a composition bias toward basic and acidic residues. The interval 75–107 (CHPDDIENPRGSKDVKKNKNVTNRSKGTAEKLQ) is disordered. N-linked (GlcNAc...) asparagine glycans are attached at residues asparagine 94 and asparagine 97. In terms of domain architecture, VWFA spans 140 to 378 (DYPIDLYYLM…QLIIDAYNSL (239 aa)). Mg(2+) is bound by residues serine 152 and serine 154. 4 residues coordinate Ca(2+): serine 154, aspartate 157, aspartate 158, and glutamate 189. Residues 207-213 (CTSEQNC) are CX3CL1-binding. N-linked (GlcNAc...) asparagine glycosylation occurs at asparagine 212. Residues asparagine 244, aspartate 246, proline 248, and glutamate 249 each contribute to the Ca(2+) site. Glutamate 249 serves as a coordination point for Mg(2+). Asparagine 269 is a glycosylation site (N-linked (GlcNAc...) asparagine). The CX3CL1-binding stretch occupies residues 295–314 (LPNDGQCHLENDVYTMSHYY). A Ca(2+)-binding site is contributed by alanine 362. N-linked (GlcNAc...) asparagine glycans are attached at residues asparagine 363, asparagine 406, and asparagine 417. The interaction with TMEM182 stretch occupies residues 383–465 (ILENSKLPEG…IILQFICECE (83 aa)). I-EGF domains follow at residues 466 to 501 (CQNE…RHCE), 502 to 554 (CSTD…KFCE), 555 to 591 (CDNF…SACD), and 592 to 631 (CSLD…PTCE). Asparagine 481 carries N-linked (GlcNAc...) asparagine glycosylation. Asparagine 520 carries an N-linked (GlcNAc...) asparagine glycan. A glycan (N-linked (GlcNAc...) asparagine) is linked at asparagine 584. Asparagine 669 is a glycosylation site (N-linked (GlcNAc...) asparagine). The chain crosses the membrane as a helical span at residues 729–751 (IIPIVAGVVAGIVLIGLALLLIW). The Cytoplasmic portion of the chain corresponds to 752 to 798 (KLLMIIHDTREFAKFEKEKMNAKWDTGENPIYKSAVTTVVNPKYEGK). The signal for sorting from recycling endosomes; interaction with ACAP1 stretch occupies residues 762 to 767 (EFAKFE). Threonine 777 carries the phosphothreonine modification. Tyrosine 783 is modified (phosphotyrosine). Serine 785 bears the Phosphoserine mark. Residues 785-792 (SAVTTVVN) are interaction with ITGB1BP1. Threonine 789 is subject to Phosphothreonine. Lysine 794 carries the N6-acetyllysine; alternate modification. Lysine 794 participates in a covalent cross-link: Glycyl lysine isopeptide (Lys-Gly) (interchain with G-Cter in SUMO1); alternate.

The protein belongs to the integrin beta chain family. As to quaternary structure, interacts with seprase FAP (seprase); the interaction occurs at the cell surface of invadopodia membrane in a collagen-dependent manner. Heterodimer of an alpha and a beta subunit. Beta-1 associates with either alpha-1, alpha-2, alpha-3, alpha-4, alpha-5, alpha-6, alpha-7, alpha-8, alpha-9, alpha-10, alpha-11 or alpha-V. ITGA6:ITGB1 is found in a complex with CD9; interaction takes place in oocytes and is involved in sperm-egg fusion. Binds LGALS3BP and NMRK2, when associated with alpha-7, but not with alpha-5. Interacts with FLNA, FLNB, FLNC and RANBP9. Interacts with KRT1 in the presence of RACK1 and SRC. Interacts with JAML; integrin alpha-4/beta-1 may regulate leukocyte to endothelial cells adhesion by controlling JAML homodimerization. Interacts with RAB21. Interacts (via the cytoplasmic region) with RAB25 (via the hypervariable C-terminal region). Interacts with MYO10. Interacts with ITGB1BP1 (via C-terminal region); the interaction is a prerequisite for focal adhesion disassembly. Interacts with TLN1; the interaction is prevented by competitive binding of ITGB1BP1. Interacts with ACAP1; required for ITGB1 recycling. Interacts with ASAP3. Interacts with FERMT2; the interaction is inhibited in presence of ITGB1BP1. Interacts with DAB2. Interacts with FGR and HCK. Interacts with alpha-7A and alpha-7B in adult skeletal muscle. Interacts with alpha-7B in cardiomyocytes of adult heart. Interacts with EMP2; the interaction may be direct or indirect and ITGB1 has a heterodimer form. ITGA5:ITGB1 interacts with CCN3. ITGA4:ITGB1 is found in a ternary complex with CX3CR1 and CX3CL1. ITGA5:ITGB1 interacts with FBN1. ITGA5:ITGB1 acts as a receptor for fibronectin FN1 and mediates R-G-D-dependent cell adhesion to FN1. ITGA5:ITGB1 interacts with IL1B. Interacts with MDK. ITGA4:ITGB1 interacts with MDK; this interaction mediates MDK-induced osteoblast cells migration through PXN phosphorylation. ITGA6:ITGB1 interacts with MDK; this interaction mediates MDK-induced neurite-outgrowth. ITGA5:ITGB1 interacts with ACE2. Interacts with TMEM182 and LAMB1. Interacts with tensin TNS3; TNS3 also interacts with PEAK1, thus acting as an adapter molecule to bridge the association of PEAK1 with ITGB1. Interacts with tensin TNS4; the interaction displaces tensin TNS3 from the ITGB1 cytoplasmic tail and promotes ITGB1 stability. Integrin ITGA9:ITGB1 interacts with SPP1/OPN (via N-terminus). Integrin ITGA9:ITGB1 interacts with TNC/TNFN3 (via the 3rd Fibronectin type-III domain). Integrins ITGA4:ITGB1 and ITGA9:ITGB1 interact with SVEP1 (via Sushi domain 21); thereby inhibit Ca(2+) intracellular signaling and as a result repress vasocontraction. ITGA4:ITGB1 and ITGA5:ITGB1 interacts with SELP. Interacts with CD248. ITGA5:ITGB1 interacts with IGFBP1. ITGA4:ITGB1 interacts with BCAM. Interacts with ADGRG6.

The protein localises to the cell membrane. It is found in the cell projection. The protein resides in the invadopodium membrane. Its subcellular location is the ruffle membrane. It localises to the recycling endosome. The protein localises to the melanosome. It is found in the lamellipodium. The protein resides in the ruffle. Its subcellular location is the cell junction. It localises to the focal adhesion. Functionally, integrins alpha-1/beta-1, alpha-2/beta-1, alpha-10/beta-1 and alpha-11/beta-1 are receptors for collagen. Integrins alpha-1/beta-1 and alpha-2/beta-2 recognize the proline-hydroxylated sequence G-F-P-G-E-R in collagen. Integrins alpha-2/beta-1, alpha-3/beta-1, alpha-4/beta-1, alpha-5/beta-1, alpha-8/beta-1, alpha-10/beta-1, alpha-11/beta-1 and alpha-V/beta-1 are receptors for fibronectin. Alpha-4/beta-1 recognizes one or more domains within the alternatively spliced CS-1 and CS-5 regions of fibronectin. Integrin alpha-5/beta-1 is a receptor for fibrinogen. Integrin alpha-1/beta-1, alpha-2/beta-1, alpha-6/beta-1 and alpha-7/beta-1 are receptors for lamimin. Integrin alpha-6/beta-1 (ITGA6:ITGB1) is present in oocytes and is involved in sperm-egg fusion. Integrin alpha-4/beta-1 is a receptor for VCAM1 and recognizes the sequence Q-I-D-S in VCAM1. Integrin alpha-9/beta-1 is a receptor for VCAM1, cytotactin and osteopontin. It recognizes the sequence A-E-I-D-G-I-E-L in cytotactin. Integrin alpha-3/beta-1 is a receptor for epiligrin, thrombospondin and CSPG4. Integrin alpha-3/beta-1 provides a docking site for FAP (seprase) at invadopodia plasma membranes in a collagen-dependent manner and hence may participate in the adhesion, formation of invadopodia and matrix degradation processes, promoting cell invasion. Alpha-3/beta-1 may mediate with LGALS3 the stimulation by CSPG4 of endothelial cells migration. Integrin alpha-V/beta-1 is a receptor for vitronectin. Beta-1 integrins recognize the sequence R-G-D in a wide array of ligands. When associated with alpha-7/beta-1 integrin, regulates cell adhesion and laminin matrix deposition. Involved in promoting endothelial cell motility and angiogenesis. Involved in osteoblast compaction through the fibronectin fibrillogenesis cell-mediated matrix assembly process and the formation of mineralized bone nodules. May be involved in up-regulation of the activity of kinases such as PKC via binding to KRT1. Together with KRT1 and RACK1, serves as a platform for SRC activation or inactivation. Plays a mechanistic adhesive role during telophase, required for the successful completion of cytokinesis. ITGA4:ITGB1 binds to fractalkine (CX3CL1) and may act as its coreceptor in CX3CR1-dependent fractalkine signaling. ITGA4:ITGB1 and ITGA5:ITGB1 bind to PLA2G2A via a site (site 2) which is distinct from the classical ligand-binding site (site 1) and this induces integrin conformational changes and enhanced ligand binding to site 1. ITGA5:ITGB1 acts as a receptor for fibrillin-1 (FBN1) and mediates R-G-D-dependent cell adhesion to FBN1. ITGA5:ITGB1 is a receptor for IL1B and binding is essential for IL1B signaling. ITGA5:ITGB3 is a receptor for soluble CD40LG and is required for CD40/CD40LG signaling. Plays an important role in myoblast differentiation and fusion during skeletal myogenesis. ITGA9:ITGB1 may play a crucial role in SVEP1/polydom-mediated myoblast cell adhesion. Integrins ITGA9:ITGB1 and ITGA4:ITGB1 repress PRKCA-mediated L-type voltage-gated channel Ca(2+) influx and ROCK-mediated calcium sensitivity in vascular smooth muscle cells via their interaction with SVEP1, thereby inhibit vasocontraction. This Felis catus (Cat) protein is Integrin beta-1 (ITGB1).